Consider the following 359-residue polypeptide: Probable E3 ubiquitin-protein ligase LUL4 (359 aa).

The tract at residues 1-35 (MGISFSNNNRRRDNNNRRHLHHYPPPPPYYYLDPP) is disordered. The N-myristoyl glycine moiety is linked to residue Gly-2. Positions 23–35 (YPPPPPYYYLDPP) are enriched in pro residues. Positions 148-267 (FVFDALFDGS…GSFKVKVVKQ (120 aa)) are DAR2 domain. An RING-type zinc finger spans residues 302–341 (CVICMTEAKDTAVLPCRHLCMCSDCAKELRLQSNKCPICR).

The protein belongs to the RING-type zinc finger family. LOG2 subfamily.

It catalyses the reaction S-ubiquitinyl-[E2 ubiquitin-conjugating enzyme]-L-cysteine + [acceptor protein]-L-lysine = [E2 ubiquitin-conjugating enzyme]-L-cysteine + N(6)-ubiquitinyl-[acceptor protein]-L-lysine.. The protein operates within protein modification; protein ubiquitination. Functionally, acts as an E3 ubiquitin-protein ligase, or as part of E3 complex, which accepts ubiquitin from specific E2 ubiquitin-conjugating enzymes and then transfers it to substrates (in vitro). In Arabidopsis thaliana (Mouse-ear cress), this protein is Probable E3 ubiquitin-protein ligase LUL4 (LUL4).